The sequence spans 104 residues: Large ribosomal subunit protein cL38 (104 aa).

Residues 1-39 constitute a chloroplast transit peptide; it reads MASVSSIFGCGVSMAPNSSLRNKAIRTERRSACGGLLIE. Residues 42–76 are disordered; sequence SRPQKKSTAHHMKTRPRKSRLSDRNRKPTVYAPLP. The segment covering 44–60 has biased composition (basic residues); sequence PQKKSTAHHMKTRPRKS.

The protein belongs to the chloroplast-specific ribosomal protein cL38 family. In terms of assembly, part of the 50S ribosomal subunit.

Its subcellular location is the plastid. The protein resides in the chloroplast. This is Large ribosomal subunit protein cL38 (PSRP6) from Pisum sativum (Garden pea).